We begin with the raw amino-acid sequence, 374 residues long: Probable trehalose-phosphate phosphatase 9 (374 aa).

The protein belongs to the trehalose phosphatase family. A divalent metal cation serves as cofactor.

The enzyme catalyses alpha,alpha-trehalose 6-phosphate + H2O = alpha,alpha-trehalose + phosphate. It participates in glycan biosynthesis; trehalose biosynthesis. In terms of biological role, removes the phosphate from trehalose 6-phosphate to produce free trehalose. Trehalose accumulation in plant may improve abiotic stress tolerance. The chain is Probable trehalose-phosphate phosphatase 9 (TPP9) from Oryza sativa subsp. japonica (Rice).